A 533-amino-acid chain; its full sequence is MSKTAKNTKTIKSVKSVNKDNKPNKDNKDDKNVDEEVINWLDKYKPTSSSQILGDKNNINRIKAFLSQFTKENAEINCPNLILTGNNGVGKTLMTDLIIQEKGFEKITADLTNISVARKSKKKKKVEKEYNGSNRTIKTYYTTLYNKSVSPTGDLIEKKIVVVFDDVSNISNNKEKEAIKSIIKINSKEKKIPIIIIANMKHSKTVNELKKMVTVTVKNTNSQGRKENKRTSNEIIIKAPNPDEIREFIAYICRKENLKLKQRKSDDDDIYEEIIQHSQFDIRRLIYILESLKMIHGNNDVTLDEFDAYREISKTKDIDPGIYKATGTLLNDYEGISGALSLYEEERATIPLMVHENYPSNIKHQYPKMSVEDQISVIHKISESISESDKIDGLIYSNQCWSLQPVHGFYSCVLPSYFINMHPNKLRMSEIYKYTQDYNKTSIKKINNKVIKKAQENQHLKRVSIYDFLYMASILKTLLERKDFEAVATLMKPYGLKLKEIESIIKIDKIKKMKNTLTGKQKTQLKELLGVDE.

Residues 1 to 11 (MSKTAKNTKTI) show a composition bias toward polar residues. The tract at residues 1–31 (MSKTAKNTKTIKSVKSVNKDNKPNKDNKDDK) is disordered. Residues 17 to 31 (VNKDNKPNKDNKDDK) are compositionally biased toward basic and acidic residues.

It belongs to the activator 1 large subunit family.

Functionally, part of the RFC clamp loader complex which loads the PCNA sliding clamp onto DNA. The polypeptide is Putative replication factor C large subunit (Acanthamoeba polyphaga (Amoeba)).